The following is a 199-amino-acid chain: Recombination protein RecR (199 aa).

Residues 57–72 form a C4-type zinc finger; that stretch reads CSQCHNITDTDPCQIC. Positions 80 to 176 constitute a Toprim domain; that stretch reads TTICVVQESR…KVTRLAHGLP (97 aa).

Belongs to the RecR family.

Its function is as follows. May play a role in DNA repair. It seems to be involved in an RecBC-independent recombinational process of DNA repair. It may act with RecF and RecO. The polypeptide is Recombination protein RecR (Shouchella clausii (strain KSM-K16) (Alkalihalobacillus clausii)).